A 389-amino-acid polypeptide reads, in one-letter code: Leucine aminopeptidase 1 (389 aa).

The first 19 residues, 1-19, serve as a signal peptide directing secretion; the sequence is MKLPALLTLGVAASTMVLA. The propeptide occupies 20–88; the sequence is AIAPDQVPLN…LPKVFPTPAV (69 aa). 5 N-linked (GlcNAc...) asparagine glycosylation sites follow: Asn96, Asn119, Asn149, Asn164, and Asn181. Zn(2+) contacts are provided by His189 and Asp208. The N-linked (GlcNAc...) asparagine glycan is linked to Asn233. Residues Glu247 and Asp274 each contribute to the Zn(2+) site. Cys323 and Cys327 form a disulfide bridge. Zn(2+) is bound at residue His356.

The protein belongs to the peptidase M28 family. M28E subfamily. In terms of assembly, monomer. It depends on Zn(2+) as a cofactor.

It is found in the secreted. Functionally, extracellular aminopeptidase that allows assimilation of proteinaceous substrates. This Paracoccidioides brasiliensis (strain Pb18) protein is Leucine aminopeptidase 1 (LAP1).